Reading from the N-terminus, the 736-residue chain is Neprilysin-2 (736 aa).

Residues methionine 1 to arginine 19 lie on the Cytoplasmic side of the membrane. The chain crosses the membrane as a helical; Signal-anchor for type II membrane protein span at residues isoleucine 20 to isoleucine 40. Over tyrosine 41 to tryptophan 736 the chain is Extracellular. A Peptidase M13 domain is found at valine 52–tryptophan 736. 5 disulfide bridges follow: cysteine 53–cysteine 58, cysteine 76–cysteine 721, cysteine 84–cysteine 681, cysteine 142–cysteine 399, and cysteine 608–cysteine 733. Residues phenylalanine 103–glutamate 123 adopt a coiled-coil conformation. Histidine 571 contacts Zn(2+). Glutamate 572 is a catalytic residue. 2 residues coordinate Zn(2+): histidine 575 and glutamate 633. Catalysis depends on aspartate 637, which acts as the Proton donor.

The protein belongs to the peptidase M13 family. Zn(2+) serves as cofactor. As to expression, expressed in muscle cells, GLR cells, SMB motor neurons and AIM interneurons.

Its subcellular location is the membrane. In terms of biological role, required for olfactory plasticity, which is the change from positive chemotaxis to dispersal after prolonged exposure to an odorant. Thought to antagonise snet-1 by degrading excess snet-1 peptides and thus enabling olfactory plasticity. The polypeptide is Neprilysin-2 (Caenorhabditis elegans).